The chain runs to 120 residues: Large ribosomal subunit protein bL12 (120 aa).

This sequence belongs to the bacterial ribosomal protein bL12 family. As to quaternary structure, homodimer. Part of the ribosomal stalk of the 50S ribosomal subunit. Forms a multimeric L10(L12)X complex, where L10 forms an elongated spine to which 2 to 4 L12 dimers bind in a sequential fashion. Binds GTP-bound translation factors.

Forms part of the ribosomal stalk which helps the ribosome interact with GTP-bound translation factors. Is thus essential for accurate translation. The chain is Large ribosomal subunit protein bL12 from Alkaliphilus metalliredigens (strain QYMF).